The chain runs to 435 residues: tRNA modification GTPase MnmE (435 aa).

3 residues coordinate (6S)-5-formyl-5,6,7,8-tetrahydrofolate: Arg-20, Glu-77, and Lys-117. The TrmE-type G domain maps to 214 to 359; the sequence is GIKVVIVGVP…FLKEIESFCL (146 aa). GTP contacts are provided by residues 224-229, 243-249, and 268-271; these read NSGKSS, TEEEGTT, and DTAG. 2 residues coordinate Mg(2+): Ser-228 and Thr-249. Lys-435 contributes to the (6S)-5-formyl-5,6,7,8-tetrahydrofolate binding site.

Belongs to the TRAFAC class TrmE-Era-EngA-EngB-Septin-like GTPase superfamily. TrmE GTPase family. In terms of assembly, homodimer. Heterotetramer of two MnmE and two MnmG subunits. The cofactor is K(+).

Its subcellular location is the cytoplasm. Its function is as follows. Exhibits a very high intrinsic GTPase hydrolysis rate. Involved in the addition of a carboxymethylaminomethyl (cmnm) group at the wobble position (U34) of certain tRNAs, forming tRNA-cmnm(5)s(2)U34. This Bartonella bacilliformis (strain ATCC 35685 / KC583 / Herrer 020/F12,63) protein is tRNA modification GTPase MnmE.